The sequence spans 268 residues: Zinc transporter ZupT (268 aa).

A run of 8 helical transmembrane segments spans residues 5 to 25 (ILFA…GSII), 38 to 58 (TVSL…EIFV), 72 to 92 (AGYI…ALID), 124 to 144 (MGLF…LATF), 152 to 172 (TLGI…GLAV), 187 to 207 (FVLS…GFFL), 211 to 231 (LFTE…MVYI), and 248 to 268 (LAIG…LLFL). Fe(2+)-binding residues include asparagine 136 and glutamate 139. Residues glutamate 139 and histidine 164 each contribute to the Zn(2+) site. Fe(2+) is bound by residues asparagine 165, glutamate 168, and glutamate 197. Glutamate 168 is a Zn(2+) binding site.

This sequence belongs to the ZIP transporter (TC 2.A.5) family. ZupT subfamily.

Its subcellular location is the cell inner membrane. The enzyme catalyses Zn(2+)(in) = Zn(2+)(out). Mediates zinc uptake. May also transport other divalent cations. In Chlorobaculum parvum (strain DSM 263 / NCIMB 8327) (Chlorobium vibrioforme subsp. thiosulfatophilum), this protein is Zinc transporter ZupT.